Consider the following 164-residue polypeptide: MTLHTPSTDAPLARRLLQLGIALFLLGLLTGFLLPMMANPRVGLSSHLEGVLNGMFLLALGLMWPQLSLGTGARKAAFGFAVYGTYANWLATLLAGFWGAGGRMMPIAAGGHTGTAAQEGLIAFALISLSLSMLVVCALALWGLRSAPARRNTDAPAAGPQPAA.

Transmembrane regions (helical) follow at residues Leu-16–Met-36, Gly-50–Gly-70, Phe-78–Trp-98, and Leu-121–Leu-141.

It is found in the cell membrane. The enzyme catalyses N-phenylhydroxylamine = 2-aminophenol. With respect to regulation, addition of ZnSO(4) decreases the activity to 70%. In terms of biological role, catalyzes the rearrangement of hydroxylaminobenzene to 2-aminophenol. This chain is Hydroxylaminobenzene mutase HabB (habB), found in Ectopseudomonas oleovorans (Pseudomonas oleovorans).